A 71-amino-acid polypeptide reads, in one-letter code: Omega-conotoxin-like Ac6.4 (71 aa).

The first 22 residues, 1 to 22 (MKLTCVVIVAVLLLTACQLLTA), serve as a signal peptide directing secretion. A propeptide spanning residues 23-45 (DDSRGTQKHRALRSDTKLSMSTR) is cleaved from the precursor. 3 cysteine pairs are disulfide-bonded: cysteine 46–cysteine 61, cysteine 53–cysteine 65, and cysteine 60–cysteine 70. Cysteine 70 carries the cysteine amide modification.

This sequence belongs to the conotoxin O1 superfamily. In terms of tissue distribution, expressed by the venom duct.

It is found in the secreted. Omega-conotoxins act at presynaptic membranes, they bind and block voltage-gated calcium channels (Cav). The protein is Omega-conotoxin-like Ac6.4 of Conus achatinus (Little frog cone).